Here is a 258-residue protein sequence, read N- to C-terminus: Acyl-[acyl-carrier-protein]--UDP-N-acetylglucosamine O-acyltransferase (258 aa).

The protein belongs to the transferase hexapeptide repeat family. LpxA subfamily. As to quaternary structure, homotrimer.

Its subcellular location is the cytoplasm. It catalyses the reaction a (3R)-hydroxyacyl-[ACP] + UDP-N-acetyl-alpha-D-glucosamine = a UDP-3-O-[(3R)-3-hydroxyacyl]-N-acetyl-alpha-D-glucosamine + holo-[ACP]. It functions in the pathway glycolipid biosynthesis; lipid IV(A) biosynthesis; lipid IV(A) from (3R)-3-hydroxytetradecanoyl-[acyl-carrier-protein] and UDP-N-acetyl-alpha-D-glucosamine: step 1/6. Involved in the biosynthesis of lipid A, a phosphorylated glycolipid that anchors the lipopolysaccharide to the outer membrane of the cell. This Saccharophagus degradans (strain 2-40 / ATCC 43961 / DSM 17024) protein is Acyl-[acyl-carrier-protein]--UDP-N-acetylglucosamine O-acyltransferase.